Consider the following 190-residue polypeptide: Threonylcarbamoyl-AMP synthase (190 aa).

Positions 7-190 (IGSIAAAVDL…ALTGELFRQG (184 aa)) constitute a YrdC-like domain.

This sequence belongs to the SUA5 family. TsaC subfamily.

It localises to the cytoplasm. The catalysed reaction is L-threonine + hydrogencarbonate + ATP = L-threonylcarbamoyladenylate + diphosphate + H2O. Its function is as follows. Required for the formation of a threonylcarbamoyl group on adenosine at position 37 (t(6)A37) in tRNAs that read codons beginning with adenine. Catalyzes the conversion of L-threonine, HCO(3)(-)/CO(2) and ATP to give threonylcarbamoyl-AMP (TC-AMP) as the acyladenylate intermediate, with the release of diphosphate. The polypeptide is Threonylcarbamoyl-AMP synthase (Salmonella typhimurium (strain LT2 / SGSC1412 / ATCC 700720)).